The following is a 281-amino-acid chain: Formamidopyrimidine-DNA glycosylase (281 aa).

The Schiff-base intermediate with DNA role is filled by P2. Residue E3 is the Proton donor of the active site. K58 functions as the Proton donor; for beta-elimination activity in the catalytic mechanism. Positions 100, 119, and 160 each coordinate DNA. Residues 245–281 (RVYGREGAPCPTPGCTGTVQRIVQSGRSSFFCPLCQQ) form an FPG-type zinc finger. R271 (proton donor; for delta-elimination activity) is an active-site residue.

It belongs to the FPG family. In terms of assembly, monomer. Zn(2+) serves as cofactor.

The catalysed reaction is Hydrolysis of DNA containing ring-opened 7-methylguanine residues, releasing 2,6-diamino-4-hydroxy-5-(N-methyl)formamidopyrimidine.. It carries out the reaction 2'-deoxyribonucleotide-(2'-deoxyribose 5'-phosphate)-2'-deoxyribonucleotide-DNA = a 3'-end 2'-deoxyribonucleotide-(2,3-dehydro-2,3-deoxyribose 5'-phosphate)-DNA + a 5'-end 5'-phospho-2'-deoxyribonucleoside-DNA + H(+). Involved in base excision repair of DNA damaged by oxidation or by mutagenic agents. Acts as a DNA glycosylase that recognizes and removes damaged bases. Has a preference for oxidized purines, such as 7,8-dihydro-8-oxoguanine (8-oxoG). Has AP (apurinic/apyrimidinic) lyase activity and introduces nicks in the DNA strand. Cleaves the DNA backbone by beta-delta elimination to generate a single-strand break at the site of the removed base with both 3'- and 5'-phosphates. The chain is Formamidopyrimidine-DNA glycosylase from Paracoccus denitrificans (strain Pd 1222).